Here is a 452-residue protein sequence, read N- to C-terminus: tRNA modification GTPase MnmE (452 aa).

(6S)-5-formyl-5,6,7,8-tetrahydrofolate-binding residues include Arg-21, Glu-78, and Lys-118. The 162-residue stretch at 214–375 (GMKVVIAGRP…LREHLKQSMG (162 aa)) folds into the TrmE-type G domain. Asn-224 is a binding site for K(+). GTP is bound by residues 224–229 (NAGKSS), 243–249 (TDIAGTT), and 268–271 (DTAG). Ser-228 lines the Mg(2+) pocket. K(+) contacts are provided by Thr-243, Ile-245, and Thr-248. Residue Thr-249 coordinates Mg(2+). Residue Lys-452 coordinates (6S)-5-formyl-5,6,7,8-tetrahydrofolate.

It belongs to the TRAFAC class TrmE-Era-EngA-EngB-Septin-like GTPase superfamily. TrmE GTPase family. As to quaternary structure, homodimer. Heterotetramer of two MnmE and two MnmG subunits. K(+) serves as cofactor.

It is found in the cytoplasm. Exhibits a very high intrinsic GTPase hydrolysis rate. Involved in the addition of a carboxymethylaminomethyl (cmnm) group at the wobble position (U34) of certain tRNAs, forming tRNA-cmnm(5)s(2)U34. This is tRNA modification GTPase MnmE from Actinobacillus succinogenes (strain ATCC 55618 / DSM 22257 / CCUG 43843 / 130Z).